A 497-amino-acid chain; its full sequence is Maintenance of mitochondrial morphology protein 1 (497 aa).

The Lumenal segment spans residues 1-28 (MSSVLNPSSPHSWDLCCSSSSNRSYHRP). Residues 29–55 (THPIVGLLVGQLSVVLLIGAFIKFFIF) traverse the membrane as a helical segment. At 56-497 (GEAPPSPSRS…GSLPDAVPIT (442 aa)) the chain is on the cytoplasmic side. Disordered regions lie at residues 60–107 (PSPS…SSST), 284–330 (ESST…STTG), 402–421 (TGVR…AAGV), and 437–497 (EMLH…VPIT). Residues 66-77 (QTHRTSQHKRSY) show a composition bias toward basic residues. Residues 81–94 (GARDLSPRTLKEKP) show a composition bias toward basic and acidic residues. Polar residues-rich tracts occupy residues 95–107 (SSNV…SSST), 284–302 (ESST…NLRS), and 311–330 (PQES…STTG). The SMP-LTD domain maps to 140-393 (QPESLDWFNV…EPRVQVVALP (254 aa)). Positions 412 to 421 (DVSSSDAAGV) are enriched in low complexity. Basic and acidic residues predominate over residues 440–451 (HAAREVDAEGLR). Residues 462–473 (GSSSKYAQQNQS) show a composition bias toward polar residues. A compositionally biased stretch (basic and acidic residues) spans 474-484 (SRERGRADDPF).

This sequence belongs to the MMM1 family. In terms of assembly, homodimer. Component of the ER-mitochondria encounter structure (ERMES) or MDM complex, composed of MMM1, MDM10, MDM12 and MDM34. An MMM1 homodimer associates with one molecule of MDM12 on each side in a pairwise head-to-tail manner, and the SMP-LTD domains of MMM1 and MDM12 generate a continuous hydrophobic tunnel for phospholipid trafficking.

It localises to the endoplasmic reticulum membrane. In terms of biological role, component of the ERMES/MDM complex, which serves as a molecular tether to connect the endoplasmic reticulum (ER) and mitochondria. Components of this complex are involved in the control of mitochondrial shape and protein biogenesis, and function in nonvesicular lipid trafficking between the ER and mitochondria. The MDM12-MMM1 subcomplex functions in the major beta-barrel assembly pathway that is responsible for biogenesis of all outer membrane beta-barrel proteins, and acts in a late step after the SAM complex. The MDM10-MDM12-MMM1 subcomplex further acts in the TOM40-specific pathway after the action of the MDM12-MMM1 complex. Essential for establishing and maintaining the structure of mitochondria and maintenance of mtDNA nucleoids. This Uncinocarpus reesii (strain UAMH 1704) protein is Maintenance of mitochondrial morphology protein 1.